We begin with the raw amino-acid sequence, 582 residues long: Probable DNA ligase (582 aa).

Position 243 (Glu243) interacts with ATP. The N6-AMP-lysine intermediate role is filled by Lys245. ATP is bound by residues Arg250, Arg265, Glu295, Phe335, Arg410, and Lys416.

It belongs to the ATP-dependent DNA ligase family. It depends on Mg(2+) as a cofactor.

It carries out the reaction ATP + (deoxyribonucleotide)n-3'-hydroxyl + 5'-phospho-(deoxyribonucleotide)m = (deoxyribonucleotide)n+m + AMP + diphosphate.. DNA ligase that seals nicks in double-stranded DNA during DNA replication, DNA recombination and DNA repair. The polypeptide is Probable DNA ligase (Dictyoglomus turgidum (strain DSM 6724 / Z-1310)).